Consider the following 325-residue polypeptide: MTEQSIKKVSVVIPVYNEQQSLPELMRRTDAACAQLALDYEILLVDDGSSDDSAAMLVAAAEAPDSHIVAVLLNRNYGQHSAIMAGFSHVSGDLVITLDADLQNPPEEIPRLVETAQQGYDVVGTVRQNRQDSGFRKIASRAINHLIQRATGKAMGDYGCMLRAYRRHIVDAMLNCHERSTFIPILANTFARQATEIPVLHAEREFGDSKYSLMSLINLMYDLITCLTTTPLRLLSVIGSVIALMGFAFSLLLIALRLFLGAEWAGDGVFMLFAVLFIFIGAQFVGMGLLGEYIGRIYNDVRARPRYFIQRVVSRDADSTKDKKS.

2 helical membrane passes run 234-254 and 269-289; these read LLSV…LLLI and VFML…GMGL.

Belongs to the glycosyltransferase 2 family.

It localises to the cell inner membrane. It catalyses the reaction UDP-4-deoxy-4-formamido-beta-L-arabinose + di-trans,octa-cis-undecaprenyl phosphate = 4-deoxy-4-formamido-alpha-L-arabinopyranosyl di-trans,octa-cis-undecaprenyl phosphate + UDP. It functions in the pathway glycolipid biosynthesis; 4-amino-4-deoxy-alpha-L-arabinose undecaprenyl phosphate biosynthesis; 4-amino-4-deoxy-alpha-L-arabinose undecaprenyl phosphate from UDP-4-deoxy-4-formamido-beta-L-arabinose and undecaprenyl phosphate: step 1/2. It participates in bacterial outer membrane biogenesis; lipopolysaccharide biosynthesis. Its function is as follows. Catalyzes the transfer of 4-deoxy-4-formamido-L-arabinose from UDP to undecaprenyl phosphate. The modified arabinose is attached to lipid A and is required for resistance to polymyxin and cationic antimicrobial peptides. This Erwinia tasmaniensis (strain DSM 17950 / CFBP 7177 / CIP 109463 / NCPPB 4357 / Et1/99) protein is Undecaprenyl-phosphate 4-deoxy-4-formamido-L-arabinose transferase.